Here is a 233-residue protein sequence, read N- to C-terminus: Ribonuclease 3 (233 aa).

Residues 4–126 (LNKLMERLGH…IVGAIYIDAG (123 aa)) form the RNase III domain. Glu-39 lines the Mg(2+) pocket. Asp-43 is an active-site residue. The Mg(2+) site is built by Asp-112 and Glu-115. Glu-115 is an active-site residue. The DRBM domain maps to 153–222 (DAKSLLQEWL…AKRFLELLDD (70 aa)).

It belongs to the ribonuclease III family. In terms of assembly, homodimer. It depends on Mg(2+) as a cofactor.

It localises to the cytoplasm. It catalyses the reaction Endonucleolytic cleavage to 5'-phosphomonoester.. Its function is as follows. Digests double-stranded RNA. Involved in the processing of primary rRNA transcript to yield the immediate precursors to the large and small rRNAs (23S and 16S). Processes some mRNAs, and tRNAs when they are encoded in the rRNA operon. Processes pre-crRNA and tracrRNA of type II CRISPR loci if present in the organism. The protein is Ribonuclease 3 of Coxiella burnetii (strain RSA 331 / Henzerling II).